The primary structure comprises 248 residues: Flavodoxin/ferredoxin--NADP reductase (248 aa).

An FAD-binding FR-type domain is found at 2 to 101; that stretch reads ADWVTGKVTK…SEAAGFFVLD (100 aa). Residue Asp-17 participates in NADP(+) binding. Residues 50-53, Tyr-66, 74-76, and Thr-116 contribute to the FAD site; these read RAYS and KLS. NADP(+) is bound by residues 143–144, 173–174, Arg-184, 214–216, and Asp-220; these read AR, SR, and NPQ. FAD is bound at residue 247-248; it reads YW.

It belongs to the ferredoxin--NADP reductase type 1 family. As to quaternary structure, monomer. FAD serves as cofactor.

The protein resides in the cytoplasm. The catalysed reaction is 2 reduced [2Fe-2S]-[ferredoxin] + NADP(+) + H(+) = 2 oxidized [2Fe-2S]-[ferredoxin] + NADPH. It catalyses the reaction reduced [flavodoxin] + NADP(+) = oxidized [flavodoxin] + NADPH + 2 H(+). Transports electrons between flavodoxin or ferredoxin and NADPH. Reduces flavodoxin 1, flavodoxin 2 and ferredoxin, ferredoxin being the kinetically and thermodynamically preferred partner. Required for the activation of several enzymes such as pyruvate formate-lyase, anaerobic ribonucleotide reductase and cobalamin-dependent methionine synthase. This is Flavodoxin/ferredoxin--NADP reductase from Escherichia coli (strain K12).